Reading from the N-terminus, the 318-residue chain is Melanocyte-stimulating hormone receptor (318 aa).

At 1-37 (MPMQGAQRKLLGSLNSTPTATSNLGLAANRTGAPCLE) the chain is on the extracellular side. N-linked (GlcNAc...) asparagine glycosylation occurs at Asn-29. A helical transmembrane segment spans residues 38–63 (LPIPNGLFLSLGLVSLVENVLVVAAI). Residues 64 to 72 (AKNRNLHSS) are Cytoplasmic-facing. Residues 73–93 (MYCFICCLALSDLLVSGSNML) form a helical membrane-spanning segment. Over 94-118 (ETAVILLLEAGVLATRASVVQQLHN) the chain is Extracellular. Residues 119–140 (TIDVLTCSSMLCSLCFLGAIAV) traverse the membrane as a helical segment. The Cytoplasmic segment spans residues 141-163 (DRYISIFYALRYHSIMTLPRAQR). A helical transmembrane segment spans residues 164 to 183 (AVAAIWVASVLSSTLFITYY). The Extracellular segment spans residues 184-191 (DHAAVLLC). A helical transmembrane segment spans residues 192–211 (LMVFFLAMLVLMAVLYVHML). The Cytoplasmic segment spans residues 212 to 240 (ARARQHAQGIIRLHKRQPPAHKGFGLRGA). Residues 241 to 266 (ATLTILLGIFFLCWGPFFLCLTLVVF) traverse the membrane as a helical segment. The Extracellular segment spans residues 267–279 (CPQHLTCNCIFKN). Residues 280–300 (FKVFLTLIICNTIIDPLIYAF) form a helical membrane-spanning segment. Residues 301–317 (RSQELRRMLKEVLGRGR) are Cytoplasmic-facing.

It belongs to the G-protein coupled receptor 1 family. Interacts with MGRN1, but does not undergo MGRN1-mediated ubiquitination; this interaction competes with GNAS-binding and thus inhibits agonist-induced cAMP production. Interacts with OPN3; the interaction results in a decrease in MC1R-mediated cAMP signaling and ultimately a decrease in melanin production in melanocytes.

The protein resides in the cell membrane. Its function is as follows. Receptor for MSH (alpha, beta and gamma) and ACTH. The activity of this receptor is mediated by G proteins which activate adenylate cyclase. Mediates melanogenesis, the production of eumelanin (black/brown) and phaeomelanin (red/yellow), via regulation of cAMP signaling in melanocytes. The sequence is that of Melanocyte-stimulating hormone receptor (MC1R) from Leontopithecus rosalia (Golden lion tamarin).